The following is a 237-amino-acid chain: Pyridoxine 5'-phosphate synthase (237 aa).

Positions 7 and 18 each coordinate 3-amino-2-oxopropyl phosphate. His-43 functions as the Proton acceptor in the catalytic mechanism. Arg-45 and His-50 together coordinate 1-deoxy-D-xylulose 5-phosphate. The Proton acceptor role is filled by Glu-70. Thr-100 is a binding site for 1-deoxy-D-xylulose 5-phosphate. His-190 acts as the Proton donor in catalysis. 3-amino-2-oxopropyl phosphate contacts are provided by residues Asp-191 and 213–214 (GH).

Belongs to the PNP synthase family. As to quaternary structure, homooctamer; tetramer of dimers.

The protein localises to the cytoplasm. The enzyme catalyses 3-amino-2-oxopropyl phosphate + 1-deoxy-D-xylulose 5-phosphate = pyridoxine 5'-phosphate + phosphate + 2 H2O + H(+). The protein operates within cofactor biosynthesis; pyridoxine 5'-phosphate biosynthesis; pyridoxine 5'-phosphate from D-erythrose 4-phosphate: step 5/5. Catalyzes the complicated ring closure reaction between the two acyclic compounds 1-deoxy-D-xylulose-5-phosphate (DXP) and 3-amino-2-oxopropyl phosphate (1-amino-acetone-3-phosphate or AAP) to form pyridoxine 5'-phosphate (PNP) and inorganic phosphate. In Flavobacterium johnsoniae (strain ATCC 17061 / DSM 2064 / JCM 8514 / BCRC 14874 / CCUG 350202 / NBRC 14942 / NCIMB 11054 / UW101) (Cytophaga johnsonae), this protein is Pyridoxine 5'-phosphate synthase.